The sequence spans 504 residues: Acetyltransferase pyiB (504 aa).

The N-terminal stretch at 1–18 (MGFLSAGGLWASLFRARI) is a signal peptide. Asn-84 is a glycosylation site (N-linked (GlcNAc...) asparagine). Residue His-181 is the Proton acceptor of the active site. Asn-413 and Asn-467 each carry an N-linked (GlcNAc...) asparagine glycan.

It belongs to the plant acyltransferase family.

The protein operates within mycotoxin biosynthesis. Functionally, acetyltransferase; part of the gene cluster that mediates the biosynthesis of the mycotoxin pyrichalasin H, a tyrosine-derived cytochalasan that inhibits the growth of rice seedlings, but also inhibits lymphocyte capping and actin polymerization and alters cell morphology. Pyrichalasin H is indicated as the responsible agent for the genus-specific pathogenicity of M.grisea toward crabgrass. The first step in the pathway is catalyzed by the O-methyltransferase pyiA which methylates free tyrosine to generate the precursor O-methyltyrosine. The hybrid PKS-NRPS pyiS, assisted by the enoyl reductase pyiC, are responsible for fusion of the O-methyltyrosine precursor and the polyketide backbone. The polyketide synthase module (PKS) of pyiS is responsible for the synthesis of the polyketide backbone and the downstream nonribosomal peptide synthetase (NRPS) amidates the carboxyl end of the polyketide with the O-methyltyrosine precursor. As the NRPS A-domain demonstrates substrate tolerance, pyiS can also use phenylalanine, tyrosine and even para-chlorophenylalanine as amino acid precursor, which leads to the production of novel cytochalasans, including halogenated cytochalasans. Because pyiS lacks a designated enoylreductase (ER) domain, the required activity is provided the enoyl reductase pyiC. Reduction by the hydrolyase pyiE leads to 1,5-dihydropyrrolone, which is substrate for dehydration and intra-molecular Diels-Alder cyclization by the Diels-Alderase pyiF to yield the required isoindolone-fused macrocycle. The tailoring cytochrome P450 monooxygenases piyD and piyG catalyze the hydroxylation at C-18 and C-7, respectivily, whereas the short-chain dehydrogenase/reductase pyiH reduces the carbonyl at C-21 in preparation for the transfer of an acetyl group by the acetyltransferase pyiB. These 3 reactions whose order is not clear yet, lead to the production of O-methylpyrichalasin J, a deacetylated pyrichalasin H. Finally, pyiB to converts O-methylpyrichalasin J into the final product pyrichalasin H via acetylation of C-21. The polypeptide is Acetyltransferase pyiB (Pyricularia grisea (Crabgrass-specific blast fungus)).